We begin with the raw amino-acid sequence, 231 residues long: Homeobox protein EMX1 (231 aa).

Residues 133 to 192 (PKRIRTAFSPSQLLRLERAFEKNHYVVGAERKQLANSLSLSETQVKVWFQNRRTKYKRQK) constitute a DNA-binding region (homeobox). Residues 193–231 (LEEEGPECTQKKKGNHHINRWRIATKQTGSEDIDVMSDA) form a disordered region. Over residues 203 to 212 (KKKGNHHINR) the composition is skewed to basic residues.

It belongs to the EMX homeobox family.

It is found in the nucleus. Its function is as follows. May function in combinations with OTX1/2 to specify cell fates in the developing central nervous system. The sequence is that of Homeobox protein EMX1 (emx1) from Danio rerio (Zebrafish).